The chain runs to 153 residues: HTH-type transcriptional regulator Zrp (153 aa).

Residues 2 to 63 (IDYRDRHILS…LLDRKKINLP (62 aa)) form the HTH asnC-type domain. Residues 21 to 40 (LAEIAERVALSVSACSRRVA) constitute a DNA-binding region (H-T-H motif).

In Zymomonas mobilis subsp. mobilis (strain ATCC 10988 / DSM 424 / LMG 404 / NCIMB 8938 / NRRL B-806 / ZM1), this protein is HTH-type transcriptional regulator Zrp (zrp).